We begin with the raw amino-acid sequence, 111 residues long: Ribosome-binding factor A (111 aa).

It belongs to the RbfA family. As to quaternary structure, monomer. Binds 30S ribosomal subunits, but not 50S ribosomal subunits or 70S ribosomes.

The protein localises to the cytoplasm. In terms of biological role, one of several proteins that assist in the late maturation steps of the functional core of the 30S ribosomal subunit. Associates with free 30S ribosomal subunits (but not with 30S subunits that are part of 70S ribosomes or polysomes). Required for efficient processing of 16S rRNA. May interact with the 5'-terminal helix region of 16S rRNA. The protein is Ribosome-binding factor A of Helicobacter pylori (strain ATCC 700392 / 26695) (Campylobacter pylori).